Consider the following 259-residue polypeptide: L-ornithine N(alpha)-acyltransferase (259 aa).

This sequence belongs to the acetyltransferase family. OlsB subfamily.

It carries out the reaction a (3R)-hydroxyacyl-[ACP] + L-ornithine = a lyso-ornithine lipid + holo-[ACP] + H(+). It participates in lipid metabolism. Its function is as follows. Catalyzes the first step in the biosynthesis of ornithine lipids, which are phosphorus-free membrane lipids. Catalyzes the 3-hydroxyacyl-acyl carrier protein-dependent acylation of ornithine to form lyso-ornithine lipid (LOL). The protein is L-ornithine N(alpha)-acyltransferase of Rhodobacter capsulatus (strain ATCC BAA-309 / NBRC 16581 / SB1003).